We begin with the raw amino-acid sequence, 476 residues long: Cysteine--tRNA ligase (476 aa).

Cysteine 28 serves as a coordination point for Zn(2+). The 'HIGH' region motif lies at 30–40 (PTVYDHTHLGH). 3 residues coordinate Zn(2+): cysteine 208, histidine 233, and glutamate 237. Positions 265–269 (KMSKS) match the 'KMSKS' region motif. Lysine 268 contributes to the ATP binding site.

The protein belongs to the class-I aminoacyl-tRNA synthetase family. Requires Zn(2+) as cofactor.

Its subcellular location is the cytoplasm. The catalysed reaction is tRNA(Cys) + L-cysteine + ATP = L-cysteinyl-tRNA(Cys) + AMP + diphosphate. This is Cysteine--tRNA ligase from Methanococcus maripaludis (strain C6 / ATCC BAA-1332).